A 489-amino-acid chain; its full sequence is Putative L,D-transpeptidase HI_1667 (489 aa).

The helical transmembrane segment at 10-29 threads the bilayer; the sequence is LSLFALSLSMMMSGCVLVGL. One can recognise a L,D-TPase catalytic domain in the interval 254–433; sequence NGIFVNIPSY…ETRKNTVLAS (180 aa). His-384 (proton donor/acceptor) is an active-site residue. The active-site Nucleophile is the Cys-403.

This sequence belongs to the YkuD family.

The protein localises to the membrane. Its pathway is cell wall biogenesis; peptidoglycan biosynthesis. The chain is Putative L,D-transpeptidase HI_1667 from Haemophilus influenzae (strain ATCC 51907 / DSM 11121 / KW20 / Rd).